A 71-amino-acid chain; its full sequence is Small, acid-soluble spore protein I (71 aa).

The protein belongs to the SspI family.

Its subcellular location is the spore core. The sequence is that of Small, acid-soluble spore protein I from Bacillus velezensis (strain DSM 23117 / BGSC 10A6 / LMG 26770 / FZB42) (Bacillus amyloliquefaciens subsp. plantarum).